Here is an 87-residue protein sequence, read N- to C-terminus: Small ribosomal subunit protein bS20 (87 aa).

A disordered region spans residues 1–23 (MANHKSAIKRHKQSVKRAARNRA).

Belongs to the bacterial ribosomal protein bS20 family.

In terms of biological role, binds directly to 16S ribosomal RNA. The polypeptide is Small ribosomal subunit protein bS20 (Oleidesulfovibrio alaskensis (strain ATCC BAA-1058 / DSM 17464 / G20) (Desulfovibrio alaskensis)).